The chain runs to 345 residues: C5a anaphylatoxin chemotactic receptor 1 (345 aa).

The Extracellular portion of the chain corresponds to 1 to 32 (MMVTVSYDYDYNSTFLPDGFVDNYVERLSFGD). 2 positions are modified to sulfotyrosine: Tyr-9 and Tyr-11. Asn-12 carries N-linked (GlcNAc...) asparagine glycosylation. A helical membrane pass occupies residues 33–59 (LVAVVIMVVVFLVGVPGNALVVWVTAC). Topologically, residues 60–64 (EARRH) are cytoplasmic. Residues 65–88 (INAIWFLNLAAADLLSCLALPILL) traverse the membrane as a helical segment. The Extracellular segment spans residues 89-105 (VSTVHLNHWYFGDTACK). A disulfide bridge links Cys-104 with Cys-183. Residues 106–127 (VLPSLILLNMYTSILLLATISA) form a helical membrane-spanning segment. Over 128–148 (DRLLLVLSPIWCQRFRGGCLA) the chain is Cytoplasmic. The helical transmembrane segment at 149 to 169 (WTACGLAWVLALLLSSPSFLY) threads the bilayer. Over 170-195 (RRTHNEHFSFKVYCVTDYGRDISKER) the chain is Extracellular. Residues 196–221 (AVALVRLLVGFIVPLITLTACYTFLL) form a helical membrane-spanning segment. Topologically, residues 222–237 (LRTWSRKATRSAKTVK) are cytoplasmic. The helical transmembrane segment at 238–260 (VVVAVVSSFFVFWLPYQVTGILL) threads the bilayer. Topologically, residues 261–277 (AWHSPNSATYRNTKALD) are extracellular. Residues 278 to 298 (AVCVAFAYINCCINPIIYVVA) form a helical membrane-spanning segment. Topologically, residues 299-345 (GHGFQGRLLKSLPSVLRNVLTEESLDKRHQSFARSTVDTMPQKSESV) are cytoplasmic. Residues Ser-309, Ser-312, Ser-322, Ser-329, and Ser-333 each carry the phosphoserine modification.

It belongs to the G-protein coupled receptor 1 family. In terms of assembly, homodimer. May also form higher-order oligomers. Interacts (when phosphorylated) with ARRB1 and ARRB2; the interaction is associated with internalization of C5aR. In terms of processing, sulfation plays a critical role in the association of C5aR with C5a, but no significant role in the ability of the receptor to transduce a signal and mobilize calcium in response to a small peptide agonist. Post-translationally, phosphorylated on serine residues in response to C5a binding, resulting in internalization of the receptor and short-term desensitization to C5a. Expressed strongly in macrophages and spleen. Weak expression detected in lung, liver, brain, heart and kidney.

The protein localises to the cell membrane. It localises to the cytoplasmic vesicle. Its function is as follows. Receptor for the chemotactic and inflammatory peptide anaphylatoxin C5a. The ligand interacts with at least two sites on the receptor: a high-affinity site on the extracellular N-terminus, and a second site in the transmembrane region which activates downstream signaling events. Receptor activation stimulates chemotaxis, granule enzyme release, intracellular calcium release and superoxide anion production. The chain is C5a anaphylatoxin chemotactic receptor 1 (C5AR1) from Cavia porcellus (Guinea pig).